The chain runs to 45 residues: Large ribosomal subunit protein bL34 (45 aa).

Positions 1 to 45 (MTKRTFGGTSRKRKRVSGFRVRMRSHTGRRVIRTRRKRGRSRLAA) are disordered. The span at 10–45 (SRKRKRVSGFRVRMRSHTGRRVIRTRRKRGRSRLAA) shows a compositional bias: basic residues.

It belongs to the bacterial ribosomal protein bL34 family.

This is Large ribosomal subunit protein bL34 from Synechococcus sp. (strain CC9311).